Here is a 309-residue protein sequence, read N- to C-terminus: Protein FdhE (309 aa).

The protein belongs to the FdhE family.

It is found in the cytoplasm. In terms of biological role, necessary for formate dehydrogenase activity. This chain is Protein FdhE, found in Salmonella arizonae (strain ATCC BAA-731 / CDC346-86 / RSK2980).